The sequence spans 462 residues: L-seryl-tRNA(Sec) selenium transferase (462 aa).

Lysine 293 carries the N6-(pyridoxal phosphate)lysine modification.

The protein belongs to the SelA family. The cofactor is pyridoxal 5'-phosphate.

The protein resides in the cytoplasm. The enzyme catalyses L-seryl-tRNA(Sec) + selenophosphate + H(+) = L-selenocysteinyl-tRNA(Sec) + phosphate. The protein operates within aminoacyl-tRNA biosynthesis; selenocysteinyl-tRNA(Sec) biosynthesis; selenocysteinyl-tRNA(Sec) from L-seryl-tRNA(Sec) (bacterial route): step 1/1. In terms of biological role, converts seryl-tRNA(Sec) to selenocysteinyl-tRNA(Sec) required for selenoprotein biosynthesis. The sequence is that of L-seryl-tRNA(Sec) selenium transferase from Clostridium botulinum (strain Langeland / NCTC 10281 / Type F).